The following is a 259-amino-acid chain: Probable ABC transporter permease protein RT0041 (259 aa).

Helical transmembrane passes span 20–40 (VGIFALFSFIAISSIIKPPLY), 49–69 (LFIGFHSLPVVAMTTFFSGAV), 148–168 (VIAAIITMPCLVLIGDVIGVM), 195–215 (LIDVISGLVKATVFGFIISII), and 237–257 (AVVNSSILILISNYLITELLF).

Belongs to the MlaE permease family.

The protein localises to the cell inner membrane. Could be part of an ABC transporter complex. This chain is Probable ABC transporter permease protein RT0041, found in Rickettsia typhi (strain ATCC VR-144 / Wilmington).